A 338-amino-acid polypeptide reads, in one-letter code: Methionine import ATP-binding protein MetN 1 (338 aa).

Residues 2–241 form the ABC transporter domain; it reads IELHQVSKSF…AKHATTKRFV (240 aa). 38–45 contacts ATP; sequence GYSGAGKS.

Belongs to the ABC transporter superfamily. Methionine importer (TC 3.A.1.24) family. In terms of assembly, the complex is composed of two ATP-binding proteins (MetN), two transmembrane proteins (MetI) and a solute-binding protein (MetQ).

The protein localises to the cell membrane. It catalyses the reaction L-methionine(out) + ATP + H2O = L-methionine(in) + ADP + phosphate + H(+). The catalysed reaction is D-methionine(out) + ATP + H2O = D-methionine(in) + ADP + phosphate + H(+). Its function is as follows. Part of the ABC transporter complex MetNIQ involved in methionine import. Responsible for energy coupling to the transport system. This is Methionine import ATP-binding protein MetN 1 from Listeria monocytogenes serotype 4b (strain F2365).